The sequence spans 309 residues: Methionyl-tRNA formyltransferase (309 aa).

109–112 (SLLP) is a (6S)-5,6,7,8-tetrahydrofolate binding site.

The protein belongs to the Fmt family.

The enzyme catalyses L-methionyl-tRNA(fMet) + (6R)-10-formyltetrahydrofolate = N-formyl-L-methionyl-tRNA(fMet) + (6S)-5,6,7,8-tetrahydrofolate + H(+). Functionally, attaches a formyl group to the free amino group of methionyl-tRNA(fMet). The formyl group appears to play a dual role in the initiator identity of N-formylmethionyl-tRNA by promoting its recognition by IF2 and preventing the misappropriation of this tRNA by the elongation apparatus. The protein is Methionyl-tRNA formyltransferase of Thiobacillus denitrificans (strain ATCC 25259 / T1).